The following is a 97-amino-acid chain: Co-chaperonin GroES (97 aa).

The protein belongs to the GroES chaperonin family. As to quaternary structure, heptamer of 7 subunits arranged in a ring. Interacts with the chaperonin GroEL.

The protein resides in the cytoplasm. In terms of biological role, together with the chaperonin GroEL, plays an essential role in assisting protein folding. The GroEL-GroES system forms a nano-cage that allows encapsulation of the non-native substrate proteins and provides a physical environment optimized to promote and accelerate protein folding. GroES binds to the apical surface of the GroEL ring, thereby capping the opening of the GroEL channel. The sequence is that of Co-chaperonin GroES from Pseudomonas fluorescens (strain Pf0-1).